A 173-amino-acid polypeptide reads, in one-letter code: Crossover junction endodeoxyribonuclease RuvC (173 aa).

Residues Asp8, Glu67, and Asp139 contribute to the active site. Mg(2+)-binding residues include Asp8, Glu67, and Asp139.

The protein belongs to the RuvC family. As to quaternary structure, homodimer which binds Holliday junction (HJ) DNA. The HJ becomes 2-fold symmetrical on binding to RuvC with unstacked arms; it has a different conformation from HJ DNA in complex with RuvA. In the full resolvosome a probable DNA-RuvA(4)-RuvB(12)-RuvC(2) complex forms which resolves the HJ. The cofactor is Mg(2+).

The protein localises to the cytoplasm. It catalyses the reaction Endonucleolytic cleavage at a junction such as a reciprocal single-stranded crossover between two homologous DNA duplexes (Holliday junction).. The RuvA-RuvB-RuvC complex processes Holliday junction (HJ) DNA during genetic recombination and DNA repair. Endonuclease that resolves HJ intermediates. Cleaves cruciform DNA by making single-stranded nicks across the HJ at symmetrical positions within the homologous arms, yielding a 5'-phosphate and a 3'-hydroxyl group; requires a central core of homology in the junction. The consensus cleavage sequence is 5'-(A/T)TT(C/G)-3'. Cleavage occurs on the 3'-side of the TT dinucleotide at the point of strand exchange. HJ branch migration catalyzed by RuvA-RuvB allows RuvC to scan DNA until it finds its consensus sequence, where it cleaves and resolves the cruciform DNA. The protein is Crossover junction endodeoxyribonuclease RuvC of Psychromonas ingrahamii (strain DSM 17664 / CCUG 51855 / 37).